The following is a 114-amino-acid chain: UPF0757 protein YmgG (114 aa).

The protein belongs to the UPF0757 family.

The chain is UPF0757 protein YmgG from Edwardsiella ictaluri (strain 93-146).